Consider the following 102-residue polypeptide: Ribonuclease P protein component 1 (102 aa).

Belongs to the eukaryotic/archaeal RNase P protein component 1 family. In terms of assembly, consists of a catalytic RNA component and at least 4-5 protein subunits.

The protein localises to the cytoplasm. It carries out the reaction Endonucleolytic cleavage of RNA, removing 5'-extranucleotides from tRNA precursor.. Part of ribonuclease P, a protein complex that generates mature tRNA molecules by cleaving their 5'-ends. The chain is Ribonuclease P protein component 1 from Archaeoglobus fulgidus (strain ATCC 49558 / DSM 4304 / JCM 9628 / NBRC 100126 / VC-16).